A 1273-amino-acid chain; its full sequence is MGYHNVKYGKKAQRRNYSKTIYDVDLPNLIEIQNQSFDWFLKHGIKELLQDFCPIESYNGDLKIHFDDYFLAPPKYSIEETKIKDISYVAQLFVKTTLENVLTGETKQSNILLTELPLMTPTGTFVINGTERVVVSQIVRSASVYFAGNFDSKLNRTTYSGQVIPSRGAWIEYEEGSKEILYAKLDRSKKIPLSNFIYALGFDSKEAIENVFGKSAIIDSVFDKETDMDSDNALVELYSKIRQGEKVPVDTARDFIRTRLFDQKKYDLAKVGRYKFNKKLDVLTRAENTYLACDFVNPETQEIIIAQDELLTKEKIAILKQNRHFLLQEIFDAKHNLENETDEEILAYKKDPQKNELFTKTNIINSRTGEVLVAKDTLVNDDIINHLRHNIHTLDEKVSKFFLGTKDIYQKEADRQGVFNEILEVYTSKDESGKLYHKVKLIGNDQRETKKHITLSDVIASINYYLNLYENVGTVDDIDHLGNRRLRLIGELLKNQFRIGLTRAEKNIKDMISTSKFSEVNGPGDLVNFTFLMSVIKTFFTSSRLSQFMDQINPLAELTQKRRVSALGIGGINRDRAGIEVRDVHNSHYGRLCPIETPEGPSIGLITSLSTYAKVNKYGFIQTPFFKVLHQDGKTTLSRHIDYLTADQEKEEIIASAGFVLDANNAFKDKKIIARSNGETGIFERSQITYADVSPKQIVSVATSSIPFLEHNDASRALMGANMQRQAVPLLIPESPIVGTGVEYRAAKDSGCLIIARESGFVTYVDAQKIIITKKPNQNVSLNGKTLYDTTQEFTYAQAKALYENNYKEHQAEYTLINFAKSNQDTLVLQKPIVVLGEQINEGDILVSGPSTSQGELALGRNVTVAFMTWEGYNYEDAIIMSEELVKHDVYTSIHIDKYEVQTRELKKGSGQEEITREVPNVGADAIKNLDERGIIIPGSEVKEGDILVGKITPQGNIEPSPSEKLIQIVIGEKAREYKDSSLRVPFGEGGIVQSVHYFSRKNGDVLPAGVNENIRVFIAKKRKINEGDKMAGRHGNKGVISRILPKEDLPYMADGTPIDIMLNPLGVPSRMNIGQILEIHLGMAAKKLGIKVATPVFDGVNDYDLKEIMKEANLDPDGKMVLYDGRTGEPYDSRISVGVMYMVKLSHMVDDKLHARNVGPYTLVTQQPMGGKVQNGGQRFGEMEVWALYAYGAAHTLQEILTVKSDDIVGRNKTYSAIVQGTPLPKPSIPESFRVFIKELQSLGLYVELIKTDTKENEVNKSLIDYKKEGYN.

This sequence belongs to the RNA polymerase beta chain family. In terms of assembly, the RNAP catalytic core consists of 2 alpha, 1 beta, 1 beta' and 1 omega subunit. When a sigma factor is associated with the core the holoenzyme is formed, which can initiate transcription.

It carries out the reaction RNA(n) + a ribonucleoside 5'-triphosphate = RNA(n+1) + diphosphate. In terms of biological role, DNA-dependent RNA polymerase catalyzes the transcription of DNA into RNA using the four ribonucleoside triphosphates as substrates. The chain is DNA-directed RNA polymerase subunit beta from Onion yellows phytoplasma (strain OY-M).